The chain runs to 178 residues: Extracellular fatty acid-binding protein (178 aa).

The signal sequence occupies residues Met1–Ala20. Ala21 carries the post-translational modification Blocked amino end (Ala). Thr43 serves as a coordination point for enterobactin. 1-tetradecanoyl-sn-glycerol 3-phosphate is bound by residues Tyr72 and Lys104. The cysteines at positions 80 and 173 are disulfide-linked. Positions 104, 123, and 134 each coordinate enterobactin. Arg134–Tyr136 provides a ligand contact to 1-tetradecanoyl-sn-glycerol 3-phosphate.

This sequence belongs to the calycin superfamily. Lipocalin family. Monomer. Does not seem to be glycosylated. Expressed in egg white (at protein level). Expressed in the magnum of the oviduct (at protein level). Preferentially synthesized in nonproliferating cells.

It localises to the secreted. Functionally, siderocalin-like lipocalin tightly binding a variety of bacterial ferric siderophores, also binds long-chain unsaturated fatty acids such as linoleic acid, oleic acid, arachidonic acid and, with a lower affinity, long chain saturated fatty acids such as steraic acid. May act as an antibacterial factor, through dual ligand specificity, both as a siderophore-sequestrating molecule and a lysophosphatidic acid (LPA) sensor. The polypeptide is Extracellular fatty acid-binding protein (EXFABP) (Gallus gallus (Chicken)).